The following is a 124-amino-acid chain: Small ribosomal subunit protein uS12 (124 aa).

Asp89 carries the post-translational modification 3-methylthioaspartic acid.

It belongs to the universal ribosomal protein uS12 family. In terms of assembly, part of the 30S ribosomal subunit. Contacts proteins S8 and S17. May interact with IF1 in the 30S initiation complex.

In terms of biological role, with S4 and S5 plays an important role in translational accuracy. Its function is as follows. Interacts with and stabilizes bases of the 16S rRNA that are involved in tRNA selection in the A site and with the mRNA backbone. Located at the interface of the 30S and 50S subunits, it traverses the body of the 30S subunit contacting proteins on the other side and probably holding the rRNA structure together. The combined cluster of proteins S8, S12 and S17 appears to hold together the shoulder and platform of the 30S subunit. The chain is Small ribosomal subunit protein uS12 from Shewanella amazonensis (strain ATCC BAA-1098 / SB2B).